We begin with the raw amino-acid sequence, 79 residues long: Putative defensin-like protein 309 (79 aa).

The first 19 residues, 1 to 19 (MKILAFFIFVLLIFSCSSS), serve as a signal peptide directing secretion. Intrachain disulfides connect C31–C50, C37–C55, and C41–C57.

It belongs to the DEFL family.

It is found in the secreted. The chain is Putative defensin-like protein 309 from Arabidopsis thaliana (Mouse-ear cress).